The chain runs to 451 residues: tRNA modification GTPase MnmE (451 aa).

The (6S)-5-formyl-5,6,7,8-tetrahydrofolate site is built by arginine 37, glutamate 95, and lysine 135. Positions 232 to 376 (GLSIVIMGPP…LVEAIADFAG (145 aa)) constitute a TrmE-type G domain. Asparagine 242 lines the K(+) pocket. GTP is bound by residues 242 to 247 (NAGKST), 261 to 267 (SEIAGTT), and 286 to 289 (DTAG). Mg(2+) is bound at residue serine 246. Residues serine 261, isoleucine 263, and threonine 266 each contribute to the K(+) site. Residue threonine 267 participates in Mg(2+) binding. Lysine 451 is a (6S)-5-formyl-5,6,7,8-tetrahydrofolate binding site.

The protein belongs to the TRAFAC class TrmE-Era-EngA-EngB-Septin-like GTPase superfamily. TrmE GTPase family. In terms of assembly, homodimer. Heterotetramer of two MnmE and two MnmG subunits. It depends on K(+) as a cofactor.

The protein resides in the cytoplasm. Exhibits a very high intrinsic GTPase hydrolysis rate. Involved in the addition of a carboxymethylaminomethyl (cmnm) group at the wobble position (U34) of certain tRNAs, forming tRNA-cmnm(5)s(2)U34. The polypeptide is tRNA modification GTPase MnmE (Beijerinckia indica subsp. indica (strain ATCC 9039 / DSM 1715 / NCIMB 8712)).